The sequence spans 986 residues: Ephrin type-A receptor 4 (986 aa).

An N-terminal signal peptide occupies residues 1–19; sequence MAGIFYFILFSFLFGICDA. Residues 20-547 lie on the Extracellular side of the membrane; sequence VTGSRVYPAN…RIIGDGANST (528 aa). The Eph LBD domain occupies 30–209; it reads EVTLLDSRSV…FYKKCPLTVR (180 aa). Residues Asn-235, Asn-340, and Asn-408 are each glycosylated (N-linked (GlcNAc...) asparagine). Fibronectin type-III domains follow at residues 328-439 and 440-537; these read PPSA…TNQA and APSS…TVPS. The chain crosses the membrane as a helical span at residues 548 to 569; sequence VLLVSVSGSVVLVVILIAAFVI. Residues 570-986 lie on the Cytoplasmic side of the membrane; the sequence is SRRRSKYSKA…QQMHGRMVPV (417 aa). Residues Tyr-596 and Tyr-602 each carry the phosphotyrosine; by autocatalysis modification. Residues 621 to 882 form the Protein kinase domain; that stretch reads IKIEKVIGVG…QIVNMLDKLI (262 aa). ATP is bound by residues 627-635 and Lys-653; that span reads IGVGEFGEV. Residue Asp-746 is the Proton acceptor of the active site. Residues Tyr-779 and Tyr-928 each carry the phosphotyrosine; by autocatalysis modification. Positions 911-975 constitute an SAM domain; that stretch reads SAVVSVGDWL…LSSVQAMRTQ (65 aa). The PDZ-binding signature appears at 984–986; sequence VPV.

Belongs to the protein kinase superfamily. Tyr protein kinase family. Ephrin receptor subfamily. In terms of assembly, heterotetramer upon binding of the ligand. The heterotetramer is composed of an ephrin dimer and a receptor dimer. Oligomerization is probably required to induce biological responses. Interacts (phosphorylated at position Tyr-602) with FYN. Interacts (via PDZ motif) with SIPA1L1 (via PDZ domain); controls neuronal morphology through regulation of the RAP1 (RAP1A or RAP1B) and RAP2 (RAP2A, RAP2B or RAP2C) GTPases. Interacts with CDK5, CDK5R1 and NGEF; upon activation by EFNA1 induces NGEF phosphorylation by the kinase CDK5. Interacts with CHN1; effector of EPHA4 in axon guidance linking EPHA4 activation to RAC1 regulation. Forms a ternary complex composed of ADAM10, CADH1 and EPHA4; within the complex, CADH1 is cleaved by ADAM10 which disrupts adherens junctions. In terms of tissue distribution, expressed in inner and outer pillar cells of the organ of Corti (at protein level). Highest expression in the adult brain and retina and also detectable in kidney, lung, skeletal muscle and thymus. Not detected in heart and liver. Expressed in myogenic progenitor cells.

Its subcellular location is the cell membrane. It is found in the cell projection. The protein localises to the axon. The protein resides in the dendrite. It localises to the postsynaptic density membrane. Its subcellular location is the early endosome. It is found in the cell junction. The protein localises to the adherens junction. The catalysed reaction is L-tyrosyl-[protein] + ATP = O-phospho-L-tyrosyl-[protein] + ADP + H(+). Its function is as follows. Receptor tyrosine kinase which binds membrane-bound ephrin family ligands residing on adjacent cells, leading to contact-dependent bidirectional signaling into neighboring cells. The signaling pathway downstream of the receptor is referred to as forward signaling while the signaling pathway downstream of the ephrin ligand is referred to as reverse signaling. Highly promiscuous, it has the unique property among Eph receptors to bind and to be physiologically activated by both GPI-anchored ephrin-A and transmembrane ephrin-B ligands including EFNA1 and EFNB3. Upon activation by ephrin ligands, modulates cell morphology and integrin-dependent cell adhesion through regulation of the Rac, Rap and Rho GTPases activity. Plays an important role in the development of the nervous system controlling different steps of axonal guidance including the establishment of the corticospinal projections. May also control the segregation of motor and sensory axons during neuromuscular circuit developmen. In addition to its role in axonal guidance plays a role in synaptic plasticity. Activated by EFNA1 phosphorylates CDK5 at 'Tyr-15' which in turn phosphorylates NGEF regulating RHOA and dendritic spine morphogenesis. In the nervous system, also plays a role in repair after injury preventing axonal regeneration and in angiogenesis playing a role in central nervous system vascular formation. Additionally, its promiscuity makes it available to participate in a variety of cell-cell signaling regulating for instance the development of the thymic epithelium. During development of the cochlear organ of Corti, regulates pillar cell separation by forming a ternary complex with ADAM10 and CADH1 which facilitates the cleavage of CADH1 by ADAM10 and disruption of adherens junctions. Phosphorylates CAPRIN1, promoting CAPRIN1-dependent formation of a membraneless compartment. The sequence is that of Ephrin type-A receptor 4 (Epha4) from Mus musculus (Mouse).